The primary structure comprises 348 residues: MGYKISIDAMGGDNGLNTTIPAALEAVKKDSNLQIVLVGDHHKVKRALDRYSKVKKIKLPVLQRIAIHHASETVGMDESPSIAVRKKKDSSMRVAINLVKDGTVDACVSAGNTGALMATSKFVLKTVNGVDRPAIVYALPAFNRDTKQLSKTYMLDLGANVVCSSEQLFQFAIMGSILAASSKGLAEPRVSLLNIGEEEMKGLDNIKNASKLLQGCDFINYQGYIEGKHIFDDTTDVIVCDGFVGNVSLKTMEGSLRLIESLIKKSITETSLLMKIPVIMSLPLFKKMKKGMNLDSFNGASLLGLTGIVVKSHGSASANAFETAIYEAVKEIKHNIPKTIQESLEKVL.

Belongs to the PlsX family. In terms of assembly, homodimer. Probably interacts with PlsY.

The protein localises to the cytoplasm. The enzyme catalyses a fatty acyl-[ACP] + phosphate = an acyl phosphate + holo-[ACP]. It participates in lipid metabolism; phospholipid metabolism. In terms of biological role, catalyzes the reversible formation of acyl-phosphate (acyl-PO(4)) from acyl-[acyl-carrier-protein] (acyl-ACP). This enzyme utilizes acyl-ACP as fatty acyl donor, but not acyl-CoA. This Francisella philomiragia subsp. philomiragia (strain ATCC 25017 / CCUG 19701 / FSC 153 / O#319-036) protein is Phosphate acyltransferase.